We begin with the raw amino-acid sequence, 249 residues long: Small ribosomal subunit protein eS6 (249 aa).

The span at 223 to 238 (LRQRDHSKKHTRKVHA) shows a compositional bias: basic residues. A disordered region spans residues 223–249 (LRQRDHSKKHTRKVHAQRAEVAAFQKK).

It belongs to the eukaryotic ribosomal protein eS6 family. Post-translationally, ribosomal protein S6 is the major substrate of protein kinases in eukaryote ribosomes.

Component of the 40S small ribosomal subunit. Plays an important role in controlling cell growth and proliferation through the selective translation of particular classes of mRNA. In Leishmania major, this protein is Small ribosomal subunit protein eS6 (RPS6).